Consider the following 1005-residue polypeptide: Band 4.1-like protein 2 (1005 aa).

The segment at M1–P80 is disordered. Position 2 is an N-acetylthreonine (T2). S7 is subject to Phosphoserine. Over residues A22 to A31 the composition is skewed to basic and acidic residues. Phosphoserine occurs at positions 39, 58, and 87. T89 bears the Phosphothreonine mark. The tract at residues A93 to E196 is disordered. 2 stretches are compositionally biased toward basic and acidic residues: residues V111–S157 and V169–E196. Glycyl lysine isopeptide (Lys-Gly) (interchain with G-Cter in SUMO2) cross-links involve residues K140 and K144. Phosphoserine is present on residues S170, S208, S386, S402, S499, S550, S562, S575, S598, and S614. Residues V218 to S499 enclose the FERM domain. The tract at residues Q502–G610 is hydrophilic. The interval K611–S676 is spectrin--actin-binding. Y623 carries the phosphotyrosine modification. 2 positions are modified to phosphoserine: S627 and S647. The tract at residues K652–V800 is disordered. Residues L675–T686 are compositionally biased toward polar residues. The segment covering V690–G711 has biased composition (basic and acidic residues). Phosphoserine is present on residues S715 and S718. The span at S734–S746 shows a compositional bias: low complexity. Basic and acidic residues-rich tracts occupy residues G754–E770 and E780–A793. Phosphothreonine is present on T763. A Phosphoserine modification is found at S828. The C-terminal (CTD) stretch occupies residues H855–D1005.

As to quaternary structure, interacts with FCGR1A. Interacts with TRPC4. Interacts (via CTD domain) with FKBP2. Interacts with NUMA1; this interaction is negatively regulated by CDK1 during metaphase and promotes anaphase-specific localization of NUMA1 in symmetrically dividing cells. In terms of tissue distribution, widely expressed.

The protein resides in the cytoplasm. Its subcellular location is the cytoskeleton. The protein localises to the cell cortex. It localises to the cell membrane. In terms of biological role, required for dynein-dynactin complex and NUMA1 recruitment at the mitotic cell cortex during anaphase. The sequence is that of Band 4.1-like protein 2 from Homo sapiens (Human).